The following is a 241-amino-acid chain: Ribonuclease PH (241 aa).

Residues R89 and G127–R129 each bind phosphate.

This sequence belongs to the RNase PH family. In terms of assembly, homohexameric ring arranged as a trimer of dimers.

The catalysed reaction is tRNA(n+1) + phosphate = tRNA(n) + a ribonucleoside 5'-diphosphate. Phosphorolytic 3'-5' exoribonuclease that plays an important role in tRNA 3'-end maturation. Removes nucleotide residues following the 3'-CCA terminus of tRNAs; can also add nucleotides to the ends of RNA molecules by using nucleoside diphosphates as substrates, but this may not be physiologically important. Probably plays a role in initiation of 16S rRNA degradation (leading to ribosome degradation) during starvation. The polypeptide is Ribonuclease PH (Stenotrophomonas maltophilia (strain K279a)).